Consider the following 142-residue polypeptide: Large ribosomal subunit protein uL29 (142 aa).

It belongs to the universal ribosomal protein uL29 family.

This Theileria annulata protein is Large ribosomal subunit protein uL29 (RPL35).